A 1060-amino-acid polypeptide reads, in one-letter code: RNA-binding protein 27 (1060 aa).

3 disordered regions span residues 80–143 (PLEP…DGKW), 160–278 (YDWR…PKRR), and 319–416 (PPPG…PPPL). Composition is skewed to basic and acidic residues over residues 84-102 (VKPE…KEEV) and 124-143 (SRSE…DGKW). The span at 165 to 185 (GRSKSRSKSRGLSRSRSRSRG) shows a compositional bias: basic residues. A compositionally biased stretch (basic and acidic residues) spans 186 to 211 (RSKDRDPNRNVEHRERSKFKSERNDL). 2 stretches are compositionally biased toward low complexity: residues 225–235 (SSEQYSSGAQS) and 255–268 (SWSN…SSNS). The C3H1-type zinc finger occupies 273 to 301 (PPPKRRCRDYDERGFCVLGDLCQFDHGND). Composition is skewed to pro residues over residues 319 to 356 (PPPG…PGPG) and 371 to 384 (QPPP…PRPP). Residues 387-402 (QSSLINSRDQPGTSAV) show a composition bias toward polar residues. Thr-447 carries the post-translational modification Phosphothreonine. At Arg-455 the chain carries Omega-N-methylarginine. A disordered region spans residues 572 to 594 (LTKKPWLGKQGNNNQSKPGFLRK). Residues 600–674 (TKLEVKKIPQ…RFIRVLWHRE (75 aa)) form the RRM domain. Residues 754–775 (HASTNQSDTSHLLNQTGGSSGE) form a disordered region. Over residues 755-770 (ASTNQSDTSHLLNQTG) the composition is skewed to polar residues. Positions 810 to 887 (VQEVLKKKQE…KDELKTSSTV (78 aa)) form a coiled coil. Ser-928 is modified (phosphoserine). A disordered region spans residues 943–982 (GRGKTISSQGRGRGRGRGRGRGSLNHMVVDHRPKALPGGG). Residues Ser-1012 and Ser-1020 each carry the phosphoserine modification. The segment at 1014–1060 (HKPKVPSISTETEEEEVKEEETETSDLFLHDDDDEDEDEYESRSWRR) is disordered. 2 stretches are compositionally biased toward acidic residues: residues 1024 to 1037 (ETEE…ETET) and 1044 to 1053 (DDDDEDEDEY).

It localises to the cytoplasm. The protein localises to the nucleus speckle. Functionally, may be involved in the turnover of nuclear polyadenylated (pA+) RNA. The sequence is that of RNA-binding protein 27 from Mus musculus (Mouse).